The sequence spans 254 residues: 5'-nucleotidase SurE (254 aa).

A divalent metal cation is bound by residues Asp-8, Asp-9, Ser-40, and Asn-93.

This sequence belongs to the SurE nucleotidase family. It depends on a divalent metal cation as a cofactor.

The protein localises to the cytoplasm. The catalysed reaction is a ribonucleoside 5'-phosphate + H2O = a ribonucleoside + phosphate. Functionally, nucleotidase that shows phosphatase activity on nucleoside 5'-monophosphates. This chain is 5'-nucleotidase SurE, found in Rhizorhabdus wittichii (strain DSM 6014 / CCUG 31198 / JCM 15750 / NBRC 105917 / EY 4224 / RW1) (Sphingomonas wittichii).